A 103-amino-acid polypeptide reads, in one-letter code: uncharacterized protein (103 aa).

The segment covering 38 to 51 (TTTTSSTTSASTTS) has biased composition (low complexity). The interval 38–70 (TTTTSSTTSASTTSQPSFSLPTSCNSNSPQSNL) is disordered. Positions 52-70 (QPSFSLPTSCNSNSPQSNL) are enriched in polar residues.

This is an uncharacterized protein from Dictyostelium discoideum (Social amoeba).